A 354-amino-acid polypeptide reads, in one-letter code: Elongation factor Ts, mitochondrial (354 aa).

The N-terminal 47 residues, 1–47 (MMRSTLSLLQKCRLPNNNGSLLSFKNNQVVNQTALFSMKSNQQYRFY), are a transit peptide targeting the mitochondrion.

This sequence belongs to the EF-Ts family.

It is found in the mitochondrion. Associates with the EF-Tu.GDP complex and induces the exchange of GDP to GTP. It remains bound to the aminoacyl-tRNA.EF-Tu.GTP complex up to the GTP hydrolysis stage on the ribosome. The polypeptide is Elongation factor Ts, mitochondrial (tsfm) (Heterostelium pallidum (strain ATCC 26659 / Pp 5 / PN500) (Cellular slime mold)).